The following is a 255-amino-acid chain: MKIGVFDSGVGGFSVLKSLLKAQLFDEIIYYGDSARVPYGTKDSATIKQFSLEALDFFKPHEIELLIVACNTASALALETMQKHSKIPIVGVIEPSILAIKQHVKDKNTPILVLGTKATIRSSAYDNALKQQGYLNVSHLATSLFVPLIEENVLEGELLETCMRYYFAPLKIFPEVIILGCTHFPLIAQKIESYFVEHFALSTPPLLIHSGDAIVEYLQQKYALKKNVYAFPKIEFHASGDVIWLEQQAKEWLKL.

Residues 7-8 (DS) and 39-40 (YG) each bind substrate. C70 acts as the Proton donor/acceptor in catalysis. 71-72 (NT) contributes to the substrate binding site. The active-site Proton donor/acceptor is the C181. 182–183 (TH) is a binding site for substrate.

Belongs to the aspartate/glutamate racemases family.

The catalysed reaction is L-glutamate = D-glutamate. It functions in the pathway cell wall biogenesis; peptidoglycan biosynthesis. Functionally, provides the (R)-glutamate required for cell wall biosynthesis. The chain is Glutamate racemase from Helicobacter acinonychis (strain Sheeba).